The sequence spans 2718 residues: Zinc finger protein 40 (2718 aa).

3 disordered regions span residues 58–182 (HLKK…CISS), 210–256 (LSQK…AESQ), and 335–373 (GLTS…PMPI). Phosphoserine is present on S141. Residues 142–158 (ELRRWRSEGADPAKFSD) are compositionally biased toward basic and acidic residues. Composition is skewed to polar residues over residues 164–182 (DSSS…CISS) and 237–256 (KNSS…AESQ). The C2H2-type 1 zinc-finger motif lies at 406-428 (YICEYCNRACAKPSVLLKHIRSH). Residue T429 is modified to Phosphothreonine. The C2H2-type 2 zinc-finger motif lies at 434–456 (YPCVTCGFSFKTKSNLYKHKKSH). Phosphoserine occurs at positions 476, 479, 492, 495, 571, and 577. Positions 484-511 (SIHSDVEDSGESEEEGATDERQHDLGAM) are disordered. The span at 490-500 (EDSGESEEEGA) shows a compositional bias: acidic residues. Residues 574–727 (RTDSPKAMDP…TPSALPTGEK (154 aa)) form a disordered region. The span at 576-585 (DSPKAMDPKP) shows a compositional bias: basic and acidic residues. A compositionally biased stretch (polar residues) spans 588–612 (SSAQKQKDLQVTNVQPLSANMSQGG). The span at 617–626 (ETNENSHQKG) shows a compositional bias: basic and acidic residues. 2 stretches are compositionally biased toward polar residues: residues 644–687 (AQLQ…QTVS) and 698–721 (STEQ…TPSA). Phosphoserine is present on residues S670 and S681. A CCHC HIVEP-type zinc finger spans residues 956–986 (GTMFECETCRNRYRKLENFENHKKFYCSELH). Residues 1022–1062 (WEQTPQIRKRRKMKSVGDDEELQQNESGTSPKSSEGLQFQN) are disordered. S1036, S1051, S1091, S1158, S1161, and S1180 each carry phosphoserine. Positions 1045-1062 (QNESGTSPKSSEGLQFQN) are enriched in polar residues. The tract at residues 1138–1169 (HTNSLSRPNSFDKPEPFERASPVSFQELNRTG) is disordered. Over residues 1160–1169 (VSFQELNRTG) the composition is skewed to polar residues. Composition is skewed to basic and acidic residues over residues 1202–1219 (LRGE…ERHV) and 1246–1259 (DLEA…KSEK). 3 disordered regions span residues 1202–1282 (LRGE…PKKK), 1384–1414 (RSKS…SRVG), and 1523–1548 (SHQS…VLSG). T1268 carries the post-translational modification Phosphothreonine. Composition is skewed to low complexity over residues 1394-1406 (TPPQ…ELQP) and 1523-1536 (SHQS…VSTQ). S1735, S1740, S1749, and S1753 each carry phosphoserine. The segment covering 1871-1883 (VRSSPAPSENTHI) has biased composition (polar residues). Positions 1871–1911 (VRSSPAPSENTHISPLKCTDNNQERKSPGVKNQGDKVNIQE) are disordered. A phosphoserine mark is found at S1884 and S2033. C2H2-type zinc fingers lie at residues 2088–2110 (YICE…IRTH) and 2116–2140 (YHCT…SKAH). Disordered regions lie at residues 2155–2228 (DEQD…PVST), 2265–2303 (SDYN…HQMS), 2327–2381 (SPSS…THLF), and 2572–2718 (PASQ…VIAT). Positions 2164 to 2175 (EKQRFSYERSGY) are enriched in basic and acidic residues. The span at 2176–2198 (DLEESDGPDEDDNENEDDDEDSQ) shows a compositional bias: acidic residues. Polar residues-rich tracts occupy residues 2199-2226 (AESV…QDPV) and 2288-2300 (TIPS…SPCH). Residues S2327 and S2599 each carry the phosphoserine modification. The segment covering 2573–2608 (ASQSKACETQPKQTSVASANQVSRTESPQGLPTVQR) has biased composition (polar residues). Basic and acidic residues predominate over residues 2623-2637 (DHARLDGLSKMDTEK). Polar residues predominate over residues 2651–2663 (TSIQGQPASTSQP). A phosphoserine mark is found at S2669 and S2682.

As to quaternary structure, interacts with UTP4.

Its subcellular location is the nucleus. The protein localises to the cytoplasm. In terms of biological role, this protein specifically binds to the DNA sequence 5'-GGGACTTTCC-3' which is found in the enhancer elements of numerous viral promoters such as those of SV40, CMV, or HIV-1. In addition, related sequences are found in the enhancer elements of a number of cellular promoters, including those of the class I MHC, interleukin-2 receptor, and interferon-beta genes. It may act in T-cell activation. Involved in activating HIV-1 gene expression. Isoform 2 and isoform 3 also bind to the IPCS (IRF1 and p53 common sequence) DNA sequence in the promoter region of interferon regulatory factor 1 and p53 genes and are involved in transcription regulation of these genes. Isoform 2 does not activate HIV-1 gene expression. Isoform 2 and isoform 3 may be involved in apoptosis. The chain is Zinc finger protein 40 (HIVEP1) from Homo sapiens (Human).